The primary structure comprises 361 residues: Peptide chain release factor 1 (361 aa).

Glutamine 235 is modified (N5-methylglutamine).

The protein belongs to the prokaryotic/mitochondrial release factor family. Methylated by PrmC. Methylation increases the termination efficiency of RF1.

Its subcellular location is the cytoplasm. In terms of biological role, peptide chain release factor 1 directs the termination of translation in response to the peptide chain termination codons UAG and UAA. In Xanthomonas campestris pv. campestris (strain B100), this protein is Peptide chain release factor 1.